A 342-amino-acid polypeptide reads, in one-letter code: Phosphate acyltransferase (342 aa).

This sequence belongs to the PlsX family. In terms of assembly, homodimer. Probably interacts with PlsY.

It localises to the cytoplasm. The catalysed reaction is a fatty acyl-[ACP] + phosphate = an acyl phosphate + holo-[ACP]. The protein operates within lipid metabolism; phospholipid metabolism. Catalyzes the reversible formation of acyl-phosphate (acyl-PO(4)) from acyl-[acyl-carrier-protein] (acyl-ACP). This enzyme utilizes acyl-ACP as fatty acyl donor, but not acyl-CoA. The sequence is that of Phosphate acyltransferase from Legionella pneumophila (strain Corby).